A 429-amino-acid polypeptide reads, in one-letter code: MPSRIPSSNDPVLPGRELWGTERFWHFAHHEHQGAFDMVSIFVVDVGSRHLSIEDWRKAWSKLYRTFAVLSQKISDDSGEGKIVDGALRAEESFFTGPILQDDQDRIDYSLQQRRFDCLSLTVFATSGTEHESFHLAISNPHALGDAKGIFAIGKALIQGVLSQTQAELQSPTSPPPQPSLKAFTTSHNQDLGLKAMFEVARTGSSIGFPILPKETSAELEPASREWRRVFTFSPAQTETLVQLCKAKALTVSAWLQATILHALIDTLVDDKGDEKAEQTFTVAAMPFHSPLSVSGATSTIFAPISIRVGSKAELNDIAEAVAESFGLARRFAEDVQDDYVKTLLKLFGSVRLETSVPTFSSLGRLDTVTGLKRYHVVARNNLPTTGIHAWTLNDQLNLTLSWAPARFRRDHIEKFWSTWIGTIKEVVA.

The protein belongs to the alcohol acetyltransferase FCK4 family.

It participates in secondary metabolite biosynthesis. Functionally, probable alcohol acetyltransferase; part of the gene cluster that mediates the biosynthesis of the glycolipid biosurfactant ustilagic acid (UA). UA is a secreted cellobiose glycolipid that is toxic for many microorganisms and confers biocontrol activity to U.maydis. UA consists of 15,16-dihydroxypalmitic or 2,15,16-trihydroxypalmitic acid, which is O-glycosidically linked to cellobiose at its terminal hydroxyl group. In addition, the cellobiose moiety is acetylated and acylated with a short-chain hydroxy fatty acid. UA biosynthesis starts with omega-hydroxylation of palmitic acid catalyzed by the cytochrome P450 monooxygenase cyp1. Terminal hydroxylation of palmitic acid precedes subterminal hydroxylation catalyzed by the cytochrome P450 monooxygenase cyp2. Sequential glucosylation of the hydroxy fatty acid is probably catalyzed by the glycosyltransferase ugt1. The cellobiose lipid is further decorated by acetylation of the proximal glucose residue and by acylation with a short-chain beta-hydroxy fatty acid at the distal glucose residue. The acyltransferase uat1 may be a good candidate for catalyzing either acetylation or acylation of the cellobiose lipid. The fatty acid synthase fas2 may be involved in synthesis of the carbon backbone of the short-chain beta-hydroxy fatty acid esterified to the cellobiose disaccharide. The secreted UA consists of a mixture of both alpha-hydroxylated and non-hydroxylated glycolipids; therefore, alpha-hydroxylation of the long-chain fatty, catalyzed by the fatty acid hydroxylase ahd1, occurs late in UA biosynthesis and may be the last step before secretion. This is Probable alcohol acetyltransferase orf1 from Mycosarcoma maydis (Corn smut fungus).